Consider the following 429-residue polypeptide: Cell wall protein ECM33 (429 aa).

Residues 1-19 (MQFKNALTATAILSASALA) form the signal peptide. Residues Asn-21, Asn-56, Asn-82, Asn-196, Asn-209, Asn-227, Asn-234, Asn-241, Asn-267, Asn-279, Asn-304, and Asn-328 are each glycosylated (N-linked (GlcNAc...) asparagine). Ser-339 carries the phosphoserine modification. Over residues 361 to 401 (LSSTSTESSKSSATSSASSSGDASNAQANVSASASSSSSSS) the composition is skewed to low complexity. The interval 361 to 410 (LSSTSTESSKSSATSSASSSGDASNAQANVSASASSSSSSSKKSKGAAPE) is disordered. Residue Asn-389 is glycosylated (N-linked (GlcNAc...) asparagine). Gly-406 carries GPI-anchor amidated glycine lipidation. Positions 407–429 (AAPELVPATSFMGVVAAVAVALL) are cleaved as a propeptide — removed in mature form.

This sequence belongs to the SPS2 family. Post-translationally, the GPI-anchor is attached to the protein in the endoplasmic reticulum and serves to target the protein to the cell surface. There, the glucosamine-inositol phospholipid moiety is cleaved off and the GPI-modified mannoprotein is covalently attached via its lipidless GPI glycan remnant to the 1,6-beta-glucan of the outer cell wall layer.

The protein resides in the cell membrane. Its subcellular location is the secreted. It localises to the cell wall. Functionally, required for proper cell wall integrity and for the correct assembly of the mannoprotein outer layer of the cell wall. Important for apical bud growth. The chain is Cell wall protein ECM33 (ECM33) from Saccharomyces cerevisiae (strain AWRI1631) (Baker's yeast).